The sequence spans 247 residues: Coproheme decarboxylase (247 aa).

Fe-coproporphyrin III is bound by residues Arg129, 143–147 (YPMDK), His170, Gln183, and Ser221. Tyr143 is an active-site residue.

It belongs to the ChdC family. Type 1 subfamily. Requires Fe-coproporphyrin III as cofactor.

The enzyme catalyses Fe-coproporphyrin III + 2 H2O2 + 2 H(+) = heme b + 2 CO2 + 4 H2O. It carries out the reaction Fe-coproporphyrin III + H2O2 + H(+) = harderoheme III + CO2 + 2 H2O. The catalysed reaction is harderoheme III + H2O2 + H(+) = heme b + CO2 + 2 H2O. It participates in porphyrin-containing compound metabolism; protoheme biosynthesis. Its function is as follows. Involved in coproporphyrin-dependent heme b biosynthesis. Catalyzes the decarboxylation of Fe-coproporphyrin III (coproheme) to heme b (protoheme IX), the last step of the pathway. The reaction occurs in a stepwise manner with a three-propionate intermediate. This chain is Coproheme decarboxylase, found in Bacillus cereus (strain ATCC 10987 / NRS 248).